Consider the following 466-residue polypeptide: 3-isopropylmalate dehydratase large subunit (466 aa).

[4Fe-4S] cluster contacts are provided by Cys-347, Cys-407, and Cys-410.

Belongs to the aconitase/IPM isomerase family. LeuC type 1 subfamily. In terms of assembly, heterodimer of LeuC and LeuD. It depends on [4Fe-4S] cluster as a cofactor.

It carries out the reaction (2R,3S)-3-isopropylmalate = (2S)-2-isopropylmalate. Its pathway is amino-acid biosynthesis; L-leucine biosynthesis; L-leucine from 3-methyl-2-oxobutanoate: step 2/4. In terms of biological role, catalyzes the isomerization between 2-isopropylmalate and 3-isopropylmalate, via the formation of 2-isopropylmaleate. The protein is 3-isopropylmalate dehydratase large subunit of Shewanella piezotolerans (strain WP3 / JCM 13877).